Consider the following 400-residue polypeptide: CinA-like protein (400 aa).

This sequence belongs to the CinA family.

This is CinA-like protein from Escherichia coli O9:H4 (strain HS).